A 98-amino-acid chain; its full sequence is Putative septation protein SpoVG (98 aa).

Belongs to the SpoVG family.

In terms of biological role, essential for sporulation. Interferes with or is a negative regulator of the pathway leading to asymmetric septation. The chain is Putative septation protein SpoVG from Bacillus pumilus (strain SAFR-032).